The sequence spans 498 residues: MRINLTTSDPEVSIREKKNLGRIAQIIGPVLDVAFPPGKMPNIYNALVVKGRDTLGQEINVTCEVQQLLGNNRVRAVAMSATEGLKRGMDVVDMGSPLSVPVGGATLGRIFNVLGEPVDNLGPVDTRTTSPIHKSAPAFIQLDTKLSIFETGIKVVDLLAPYRRGGKIGLFGGAGVGKTVLIMELINNIAKAHGGVSVFGGVGERTREGNDLYMEMKESGVINEQNLAESKVALVYGQMNEPPGARMRVGLTALTMAEYFRDVNEQDVLLFIDNIFRFVQAGSEVSALLGRMPSAVGYQPTLSTEMGTLQERITSTKKGSITSIQAVYVPADDLTDPAPATTFAHLDATTVLSRGLAAKGIYPAVDPLDSTSTMLQPRIVGEEHYETAQQVKQTLQRYKELQDIIAILGLDELSEEDRLTVARARKIERFLSQPFFVAEVFTGSPGKYVGLAETIRGFKLILSGEFDSLPEQAFYLVGNIDEATAKATNLEMESKLKK.

Residue Thr-6 is modified to Phosphothreonine. Ser-13 carries the post-translational modification Phosphoserine. An ATP-binding site is contributed by 172-179; it reads GGAGVGKT.

It belongs to the ATPase alpha/beta chains family. F-type ATPases have 2 components, CF(1) - the catalytic core - and CF(0) - the membrane proton channel. CF(1) has five subunits: alpha(3), beta(3), gamma(1), delta(1), epsilon(1). CF(0) has four main subunits: a(1), b(1), b'(1) and c(9-12).

Its subcellular location is the plastid. It localises to the chloroplast thylakoid membrane. The catalysed reaction is ATP + H2O + 4 H(+)(in) = ADP + phosphate + 5 H(+)(out). In terms of biological role, produces ATP from ADP in the presence of a proton gradient across the membrane. The catalytic sites are hosted primarily by the beta subunits. This Nasturtium officinale (Watercress) protein is ATP synthase subunit beta, chloroplastic.